Here is a 233-residue protein sequence, read N- to C-terminus: Type IV secretion system protein PtlE homolog (233 aa).

Residues 42–62 form a helical membrane-spanning segment; the sequence is VAWAALAVTALSLIAIATMLP.

The protein belongs to the virB8 family.

The protein localises to the cell inner membrane. The polypeptide is Type IV secretion system protein PtlE homolog (ptlE) (Bordetella bronchiseptica (strain ATCC BAA-588 / NCTC 13252 / RB50) (Alcaligenes bronchisepticus)).